The following is a 296-amino-acid chain: Stanniocalcin-2 (296 aa).

The first 24 residues, 1–24 (MCAERLGQFVTLALVFATLDPARG), serve as a signal peptide directing secretion. Positions 22–44 (ARGTDSTNPPEGPQDRGSQQKGR) are disordered. Asn73 carries an N-linked (GlcNAc...) asparagine glycan. The interval 236 to 296 (RPYHRDTDHH…EQSEYSDIRR (61 aa)) is disordered. A compositionally biased stretch (basic and acidic residues) spans 238–258 (YHRDTDHHLTANRGAKGERGS).

Belongs to the stanniocalcin family. Homodimer; disulfide-linked. As to expression, expressed in a variety of tissues. Strongly expressed in ovary and to a lesser extent in kidney.

The protein resides in the secreted. In terms of biological role, has an anti-hypocalcemic action on calcium and phosphate homeostasis. This is Stanniocalcin-2 (Stc2) from Rattus norvegicus (Rat).